The chain runs to 241 residues: Phosphoadenosine 5'-phosphosulfate reductase (241 aa).

The active-site Nucleophile; cysteine thiosulfonate intermediate is C235.

The protein belongs to the PAPS reductase family. CysH subfamily.

It localises to the cytoplasm. It catalyses the reaction [thioredoxin]-disulfide + sulfite + adenosine 3',5'-bisphosphate + 2 H(+) = [thioredoxin]-dithiol + 3'-phosphoadenylyl sulfate. The protein operates within sulfur metabolism; hydrogen sulfide biosynthesis; sulfite from sulfate: step 3/3. Its function is as follows. Catalyzes the formation of sulfite from phosphoadenosine 5'-phosphosulfate (PAPS) using thioredoxin as an electron donor. The sequence is that of Phosphoadenosine 5'-phosphosulfate reductase from Xanthomonas axonopodis pv. citri (strain 306).